Consider the following 451-residue polypeptide: Zinc finger MYND domain-containing protein 10 homolog (451 aa).

Residues Cys-412, Cys-415, Cys-423, Cys-426, Cys-432, Cys-436, His-444, and Cys-448 each coordinate Zn(2+). An MYND-type zinc finger spans residues 412–448; sequence CATCQAKAKKKCACCKKVHYCSRDCQLKDWPQHKLVC.

This sequence belongs to the ZMYND10 family. Specifically expressed in cells with flagella and motile cilia: chordotonal sensory neurons and sperm.

Its subcellular location is the cytoplasm. The protein resides in the cell projection. It localises to the cilium. The protein localises to the dynein axonemal particle. Plays a role in axonemal structure organization and motility. May be involved in axonemal pre-assembly of inner and outer dynein arms (IDA and ODA, respectively) for proper axoneme building for cilia motility. The chain is Zinc finger MYND domain-containing protein 10 homolog from Drosophila melanogaster (Fruit fly).